A 394-amino-acid chain; its full sequence is Elongation factor Tu 2 (394 aa).

A tr-type G domain is found at 10 to 204 (KPHVNVGTIG…YLDSYIPEPE (195 aa)). The interval 19-26 (GHVDHGKT) is G1. Residue 19–26 (GHVDHGKT) participates in GTP binding. Residue threonine 26 coordinates Mg(2+). Residues 60 to 64 (GITIN) are G2. The tract at residues 81-84 (DCPG) is G3. GTP-binding positions include 81–85 (DCPGH) and 136–139 (NKCD). Positions 136-139 (NKCD) are G4. The segment at 174-176 (SAL) is G5.

The protein belongs to the TRAFAC class translation factor GTPase superfamily. Classic translation factor GTPase family. EF-Tu/EF-1A subfamily. As to quaternary structure, monomer.

The protein localises to the cytoplasm. It carries out the reaction GTP + H2O = GDP + phosphate + H(+). In terms of biological role, GTP hydrolase that promotes the GTP-dependent binding of aminoacyl-tRNA to the A-site of ribosomes during protein biosynthesis. The protein is Elongation factor Tu 2 of Yersinia pseudotuberculosis serotype O:1b (strain IP 31758).